Consider the following 518-residue polypeptide: GMP synthase [glutamine-hydrolyzing] (518 aa).

The 194-residue stretch at 8-201 (TVLIIDFGSQ…VLKISNLKGN (194 aa)) folds into the Glutamine amidotransferase type-1 domain. Cysteine 85 (nucleophile) is an active-site residue. Residues histidine 175 and glutamate 177 contribute to the active site. The region spanning 202-393 (WSMASYREQT…LGLPEQFIGR (192 aa)) is the GMPS ATP-PPase domain. Position 229–235 (229–235 (SGGVDSS)) interacts with ATP.

In terms of assembly, homodimer.

The catalysed reaction is XMP + L-glutamine + ATP + H2O = GMP + L-glutamate + AMP + diphosphate + 2 H(+). It participates in purine metabolism; GMP biosynthesis; GMP from XMP (L-Gln route): step 1/1. Its function is as follows. Catalyzes the synthesis of GMP from XMP. This Bartonella henselae (strain ATCC 49882 / DSM 28221 / CCUG 30454 / Houston 1) (Rochalimaea henselae) protein is GMP synthase [glutamine-hydrolyzing].